Consider the following 640-residue polypeptide: Threonine--tRNA ligase (640 aa).

In terms of domain architecture, TGS spans 1-61; the sequence is MPTITLPDGS…ENDASLQIIT (61 aa). A catalytic region spans residues 242–533; that stretch reads DHRKIGKRLG…LIEHYEGAFP (292 aa). Zn(2+) contacts are provided by C333, H384, and H510.

Belongs to the class-II aminoacyl-tRNA synthetase family. Homodimer. Requires Zn(2+) as cofactor.

It is found in the cytoplasm. It carries out the reaction tRNA(Thr) + L-threonine + ATP = L-threonyl-tRNA(Thr) + AMP + diphosphate + H(+). In terms of biological role, catalyzes the attachment of threonine to tRNA(Thr) in a two-step reaction: L-threonine is first activated by ATP to form Thr-AMP and then transferred to the acceptor end of tRNA(Thr). Also edits incorrectly charged L-seryl-tRNA(Thr). The polypeptide is Threonine--tRNA ligase (Pseudomonas savastanoi pv. phaseolicola (strain 1448A / Race 6) (Pseudomonas syringae pv. phaseolicola (strain 1448A / Race 6))).